A 210-amino-acid polypeptide reads, in one-letter code: N-(5'-phosphoribosyl)anthranilate isomerase (210 aa).

The protein belongs to the TrpF family.

It carries out the reaction N-(5-phospho-beta-D-ribosyl)anthranilate = 1-(2-carboxyphenylamino)-1-deoxy-D-ribulose 5-phosphate. It participates in amino-acid biosynthesis; L-tryptophan biosynthesis; L-tryptophan from chorismate: step 3/5. The chain is N-(5'-phosphoribosyl)anthranilate isomerase from Staphylococcus aureus (strain MRSA252).